A 99-amino-acid polypeptide reads, in one-letter code: Aspartyl/glutamyl-tRNA(Asn/Gln) amidotransferase subunit C (99 aa).

The protein belongs to the GatC family. As to quaternary structure, heterotrimer of A, B and C subunits.

The catalysed reaction is L-glutamyl-tRNA(Gln) + L-glutamine + ATP + H2O = L-glutaminyl-tRNA(Gln) + L-glutamate + ADP + phosphate + H(+). It catalyses the reaction L-aspartyl-tRNA(Asn) + L-glutamine + ATP + H2O = L-asparaginyl-tRNA(Asn) + L-glutamate + ADP + phosphate + 2 H(+). Its function is as follows. Allows the formation of correctly charged Asn-tRNA(Asn) or Gln-tRNA(Gln) through the transamidation of misacylated Asp-tRNA(Asn) or Glu-tRNA(Gln) in organisms which lack either or both of asparaginyl-tRNA or glutaminyl-tRNA synthetases. The reaction takes place in the presence of glutamine and ATP through an activated phospho-Asp-tRNA(Asn) or phospho-Glu-tRNA(Gln). In Paraburkholderia xenovorans (strain LB400), this protein is Aspartyl/glutamyl-tRNA(Asn/Gln) amidotransferase subunit C.